Reading from the N-terminus, the 959-residue chain is MAPLSAALLPWHGVCVPVCYGESRILRVKVVSGIDLAKKDIFGASDPYVKLSLYVADENRELALVQTKTIKKTLNPKWNEEFYFRVNPSNHRLLFEVFDENRLTRDDFLGQVDVPLSHLPTEDPTMERPYTFKDFLLRPRSHKSRVKGFLRLKMAYMPKNGGQEEENSEQRDDMEHGWEVVDSNDSASQHQEELPPPPLPPGWEEKVDNLGRTYYVNHNNRTTQWHRPSLMDVSSESDNNIRQINQEAAHRRFRSRRHISEDLEPEPSEGGDVPEPWETISEEVNIAGDSLGLALPPPPASPGSRTSPQELSEELSRRLQITPDSNGEQFSSLIQREPSSRLRSCSVTDAVAEQGHLPPPSVAYVHTTPGLPSGWEERKDAKGRTYYVNHNNRTTTWTRPIMQLAEDGASGSATNSNNHLIEPQIRRPRSLSSPTVTLSAPLEGAKDSPVRRAVKDTLSNPQSPQPSPYNSPKPQHKVTQSFLPPGWEMRIAPNGRPFFIDHNTKTTTWEDPRLKFPVHMRSKTSLNPNDLGPLPPGWEERIHLDGRTFYIDHNSKITQWEDPRLQNPAITGPAVPYSREFKQKYDYFRKKLKKPADIPNRFEMKLHRNNIFEESYRRIMSVKRPDVLKARLWIEFESEKGLDYGGVAREWFFLLSKEMFNPYYGLFEYSATDNYTLQINPNSGLCNEDHLSYFTFIGRVAGLAVFHGKLLDGFFIRPFYKMMLGKQITLNDMESVDSEYYNSLKWILENDPTELDLMFCIDEENFGQTYQVDLEPNGSEIMVTNENKREYIDLVIQWRFVNRVQKQMNAFLEGFTELLPIDLIKIFDENELELLMCGLGDVDVNDWRQHSIYKNGYCPNHPVIQWFWKAVLLMDAEKRIRLLQFVTGTSRVPMNGFAELYGSNGPQLFTIEQWGSPEKLPRAHTCFNRLDLPPYETFEDLREKLLMAVENAQGFEGVD.

In terms of domain architecture, C2 spans 10–130 (PWHGVCVPVC…TEDPTMERPY (121 aa)). Disordered stretches follow at residues 183 to 206 (SNDS…WEEK), 248 to 275 (AAHR…DVPE), and 289 to 316 (DSLG…EELS). One can recognise a WW 1 domain in the interval 197–230 (PPLPPGWEEKVDNLGRTYYVNHNNRTTQWHRPSL). The residue at position 316 (serine 316) is a Phosphoserine. Threonine 322 is subject to Phosphothreonine. At serine 346 the chain carries Phosphoserine; by WNK1 and WNK4. One can recognise a WW 2 domain in the interval 369-402 (PGLPSGWEERKDAKGRTYYVNHNNRTTTWTRPIM). A disordered region spans residues 408–478 (GASGSATNSN…YNSPKPQHKV (71 aa)). At serine 430 the chain carries Phosphoserine. Phosphoserine; by SGK1 is present on serine 432. Phosphoserine; by WNK1 and WNK4 is present on serine 433. The segment covering 444-455 (GAKDSPVRRAVK) has biased composition (basic and acidic residues). Residue serine 448 is modified to Phosphoserine; by SGK1. Phosphoserine is present on residues serine 459, serine 463, serine 467, and serine 471. WW domains lie at 481–514 (SFLP…DPRL) and 532–565 (GPLP…DPRL). The HECT domain maps to 624–958 (RPDVLKARLW…VENAQGFEGV (335 aa)). The active-site Glycyl thioester intermediate is the cysteine 926.

As to quaternary structure, interacts with UBE2E3. Interacts with NDFIP1; this interaction activates the E3 ubiquitin-protein ligase. Interacts with NDFIP2; this interaction activates the E3 ubiquitin-protein ligase. Interacts (via WW domains) with SCN1A. Interacts (via WW domains) with SCN2A. Interacts (via WW domains) with SCN3A. Interacts (via WW domains) with SCN5A. Interacts (via WW domains) with SCN8A. Interacts (via WW domains) with SCN9A. Interacts (via WW domains) with SCN10A. Interacts (via WW domains) with CLCN5. Interacts with SMAD2. Interacts with SMAD3. Interacts with SMAD6. Interacts with SMAD7. The phosphorylated form interacts with 14-3-3 proteins. Interacts with TNK2. Interacts with WNK1. Interacts with SGK1. Interacts (via C2 domain) with NPC2. Interacts with ARRDC4. Interacts with KCNQ1; promotes internalization of KCNQ1. Interacts (via domains WW1, 3 and 4) with USP36; the interaction inhibits ubiquitination of, at least, NTRK1, KCNQ2 and KCNQ3 by NEDD4L. Interacts with PRRG4 (via cytoplasmic domain). Interacts with LDLRAD3; the interaction is direct. Interacts with TTYH2 and TTYH3. Phosphorylated; which impairs interaction with SCNN. Interaction with YWHAH inhibits dephosphorylation. Post-translationally, auto-ubiquitinated.

It is found in the cytoplasm. Its subcellular location is the golgi apparatus. The protein localises to the endosome. It localises to the multivesicular body. It catalyses the reaction S-ubiquitinyl-[E2 ubiquitin-conjugating enzyme]-L-cysteine + [acceptor protein]-L-lysine = [E2 ubiquitin-conjugating enzyme]-L-cysteine + N(6)-ubiquitinyl-[acceptor protein]-L-lysine.. Its pathway is protein modification; protein ubiquitination. Activated by NDFIP1- and NDFIP2-binding. Functionally, E3 ubiquitin-protein ligase which accepts ubiquitin from an E2 ubiquitin-conjugating enzyme in the form of a thioester and then directly transfers the ubiquitin to targeted substrates. Inhibits TGF-beta signaling by triggering SMAD2 and TGFBR1 ubiquitination and proteasome-dependent degradation. Promotes ubiquitination and internalization of various plasma membrane channels such as ENaC, Nav1.2, Nav1.3, Nav1.5, Nav1.7, Nav1.8, Kv1.3, KCNH2, EAAT1 or CLC5. Promotes ubiquitination and degradation of SGK1 and TNK2. Ubiquitinates BRAT1 and this ubiquitination is enhanced in the presence of NDFIP1. Plays a role in dendrite formation by melanocytes. Involved in the regulation of TOR signaling. Ubiquitinates TTYH2 and TTYH3 and regulates protein levels of TTYH2. This chain is E3 ubiquitin-protein ligase NEDD4-like (NEDD4L), found in Pongo abelii (Sumatran orangutan).